We begin with the raw amino-acid sequence, 218 residues long: Ras-related protein R-Ras (218 aa).

The segment at 1-30 is disordered; that stretch reads MSSGAASGTGRGRPRGGGPGPRDPPPGETH. A compositionally biased stretch (gly residues) spans 7–20; sequence SGTGRGRPRGGGPG. 36–44 provides a ligand contact to GTP; sequence GGGGVGKSA. The Effector region signature appears at 58–66; it reads YDPTIEDSY. Residues 83–87, 142–145, and 172–174 each bind GTP; these read DTAGQ, NKAD, and SAK. A Cysteine methyl ester modification is found at Cys-215. A lipid anchor (S-geranylgeranyl cysteine) is attached at Cys-215. Residues 216–218 constitute a propeptide, removed in mature form; it reads VLL.

The protein belongs to the small GTPase superfamily. Ras family. As to quaternary structure, interacts with PLCE1. Interacts (active GTP-bound form preferentially) with RGS14. Interacts with OSBPL3. Interacts with ZDHHC19. In terms of processing, S-palmitoylated by ZDHHC19, leading to increased association with membranes and with rafts/caveolae as well as enhanced cell viability.

The protein resides in the cell membrane. The catalysed reaction is GTP + H2O = GDP + phosphate + H(+). GTP-binding protein with GTPase activity, likely involved in the regulation of MAPK signaling pathway and thereby controlling multiple cellular processes. Regulates the organization of the actin cytoskeleton. With OSPBL3, modulates integrin beta-1 (ITGB1) activity. The chain is Ras-related protein R-Ras (Rras) from Mus musculus (Mouse).